We begin with the raw amino-acid sequence, 417 residues long: Serine hydroxymethyltransferase 1 (417 aa).

(6S)-5,6,7,8-tetrahydrofolate-binding positions include leucine 121 and 125-127 (GHL). Lysine 229 is modified (N6-(pyridoxal phosphate)lysine). 354–356 (SPF) is a binding site for (6S)-5,6,7,8-tetrahydrofolate.

It belongs to the SHMT family. Homodimer. Pyridoxal 5'-phosphate is required as a cofactor.

The protein resides in the cytoplasm. The enzyme catalyses (6R)-5,10-methylene-5,6,7,8-tetrahydrofolate + glycine + H2O = (6S)-5,6,7,8-tetrahydrofolate + L-serine. It functions in the pathway one-carbon metabolism; tetrahydrofolate interconversion. It participates in amino-acid biosynthesis; glycine biosynthesis; glycine from L-serine: step 1/1. Catalyzes the reversible interconversion of serine and glycine with tetrahydrofolate (THF) serving as the one-carbon carrier. This reaction serves as the major source of one-carbon groups required for the biosynthesis of purines, thymidylate, methionine, and other important biomolecules. Also exhibits THF-independent aldolase activity toward beta-hydroxyamino acids, producing glycine and aldehydes, via a retro-aldol mechanism. In Pseudomonas fluorescens (strain ATCC BAA-477 / NRRL B-23932 / Pf-5), this protein is Serine hydroxymethyltransferase 1.